The following is an 85-amino-acid chain: uncharacterized protein (85 aa).

A signal peptide spans 1–21; the sequence is MRPLLCALAGLALLCAVGALA. The span at 22–35 shows a compositional bias: basic and acidic residues; it reads DGREDRGSPGDTGE. Residues 22–85 are disordered; the sequence is DGREDRGSPG…EVVHLPGSTL (64 aa). A compositionally biased stretch (low complexity) spans 36–51; that stretch reads RPAGPARGPGLEPARG.

It localises to the secreted. This is an uncharacterized protein from Homo sapiens (Human).